The primary structure comprises 356 residues: Guanine nucleotide-binding protein alpha-15 subunit (356 aa).

The N-myristoyl glycine moiety is linked to residue Gly2. A lipid anchor (S-palmitoyl cysteine) is attached at Cys5. A G-alpha domain is found at 33-356; sequence GNQKLLLLGT…GRNLRGTGME (324 aa). The G1 motif stretch occupies residues 36–49; that stretch reads KLLLLGTGECGKST. Residues 41-48, 177-183, 202-206, 271-274, and Ala328 each bind GTP; these read GTGECGKS, LRIRIPT, DVGGQ, and NKRD. Mg(2+)-binding residues include Ser48 and Thr183. Residues 175–183 form a G2 motif region; the sequence is DMLRIRIPT. A G3 motif region spans residues 198 to 207; that stretch reads FRIYDVGGQR. Residues 267 to 274 are G4 motif; the sequence is ILFLNKRD. Residues 326–331 form a G5 motif region; it reads TCATDT.

It belongs to the G-alpha family. In terms of assembly, g proteins are composed of 3 units; alpha, beta and gamma. The alpha chain contains the guanine nucleotide binding site.

Guanine nucleotide-binding proteins (G proteins) are involved as modulators or transducers in various transmembrane signaling systems. The polypeptide is Guanine nucleotide-binding protein alpha-15 subunit (gpa-15) (Caenorhabditis elegans).